Reading from the N-terminus, the 760-residue chain is Cyclin-D-binding Myb-like transcription factor 1 (760 aa).

The segment at 1–237 (MSTVEEDSDT…TPEEIEKLKE (237 aa)) is interaction with CCND2. Residues 87 to 170 (VTMTATTEVA…IDILMNNIER (84 aa)) form a required for transcriptional activation region. Residues 87–458 (VTMTATTEVA…DNTAISSSPM (372 aa)) form a required for DNA-binding region. Positions 176–760 (GIKDATEIIF…KDVEDLVNCH (585 aa)) are interaction with CCND1, CCND2 and CCND3. The Myb-like 1 domain maps to 225–263 (GKYTPEEIEKLKELRIKHGNDWATIGAALGRSASSVKDR). The region spanning 268 to 333 (KDTCNTGKWT…KWLNYLNWKQ (66 aa)) is the HTH myb-type domain. The H-T-H motif DNA-binding region spans 306 to 329 (WAAVAERVGTRSEKQCRSKWLNYL). One can recognise a Myb-like 2 domain in the interval 339–388 (WTKEDEINLILRIAELDVADENDINWDLLAEGWSSVRSPQWLRSKWWTIK). Disordered stretches follow at residues 414-435 (KNNPTLLENKSGSGVPNSNTNS) and 738-760 (IGSSLGSPVSEDSKDVEDLVNCH). Positions 459 to 760 (AALQIPVQIT…KDVEDLVNCH (302 aa)) are required for transcriptional activation.

The protein belongs to the DMTF1 family. Interacts with the D-type cyclins CCND1, CCND2 and CCND3. Interaction with D-type cyclins may modulate transcriptional activation by this protein. In terms of processing, phosphorylated by the cyclin-D2/CDK4, cyclin-D3/CDK4 and cyclin-D2/CDK6 complexes and to a lesser extent by the cyclin-D1/CDK4 complex. As to expression, expressed at relatively low levels in colonic mucosa, ovary, peripheral leukocytes, prostate and small intestine, and at higher levels in spleen, testis and thymus. Expressed in multiple regions of the brain and CNS including amygdala, caudate, corpus callosum, hippocampus, substantia nigra and subthalamic nucleus. Isoform 1 is the predominant isoform in monocytes, macrophages and neutrophils, isoform 2 is most strongly expressed in peripheral blood leukocytes and quiescent CD34 positive cells, and isoform 3 is expressed at low levels in all hematopoietic cell types. Expression is frequently reduced in non-small-cell lung carcinomas (NSCLC) due to hemizygous gene deletion, strongly suggesting that this locus is haploinsufficient for tumor suppression. Loss of this locus frequently occurs in tumors which retain wild-type CDKN2A/ARF and p53/TP53 loci. Hemizygous gene deletion has also been observed in leukemic blasts from patients with abnormalities of the long arm of chromosome 7.

The protein resides in the nucleus. Functionally, transcriptional activator which activates the CDKN2A/ARF locus in response to Ras-Raf signaling, thereby promoting p53/TP53-dependent growth arrest. Binds to the consensus sequence 5'-CCCG[GT]ATGT-3'. Isoform 1 may cooperate with MYB to activate transcription of the ANPEP gene. Isoform 2 may antagonize transcriptional activation by isoform 1. The polypeptide is Cyclin-D-binding Myb-like transcription factor 1 (DMTF1) (Homo sapiens (Human)).